Here is a 383-residue protein sequence, read N- to C-terminus: Delta(12) fatty acid desaturase FAD2 (383 aa).

The disordered stretch occupies residues 1–29; that stretch reads MGAGGRMQDPTNGGNKTEPEPIQRVPHEK. Residues 17–29 show a composition bias toward basic and acidic residues; it reads TEPEPIQRVPHEK. 2 helical membrane-spanning segments follow: residues 50-70 and 85-105; these read VIRS…LYYI and VAWP…WVIA. Positions 106 to 110 match the Histidine box-1 motif; sequence HECGH. Residues 118–138 form a helical membrane-spanning segment; the sequence is WLDDTVGLVLHSFLLVPYFSW. The Histidine box-2 signature appears at 142–146; it reads HRRHH. The next 3 membrane-spanning stretches (helical) occupy residues 180 to 200, 226 to 246, and 252 to 272; these read ILTL…FNVS, IFIS…LAMT, and VLTM…LITF. The short motif at 316–320 is the Histidine box-3 element; the sequence is HVAHH.

Belongs to the fatty acid desaturase type 1 family. In terms of tissue distribution, expressed in leaves, flower buds and developing seeds.

The protein localises to the membrane. It participates in lipid metabolism; polyunsaturated fatty acid biosynthesis. Catalyzes the desaturation of oleic acid to linoleic acid. Introduces a double bond at position 12 of 16:1(9Z) and 18:1(9Z). The chain is Delta(12) fatty acid desaturase FAD2 from Calendula officinalis (Pot marigold).